Here is a 400-residue protein sequence, read N- to C-terminus: Argininosuccinate synthase (400 aa).

9–17 is a binding site for ATP; that stretch reads AYSGGLDTS. Tyrosine 87 lines the L-citrulline pocket. Glycine 117 lines the ATP pocket. Positions 119, 123, and 124 each coordinate L-aspartate. Asparagine 123 is an L-citrulline binding site. L-citrulline contacts are provided by arginine 127, serine 176, serine 185, glutamate 261, and tyrosine 273.

It belongs to the argininosuccinate synthase family. Type 1 subfamily. As to quaternary structure, homotetramer.

The protein localises to the cytoplasm. The enzyme catalyses L-citrulline + L-aspartate + ATP = 2-(N(omega)-L-arginino)succinate + AMP + diphosphate + H(+). Its pathway is amino-acid biosynthesis; L-arginine biosynthesis; L-arginine from L-ornithine and carbamoyl phosphate: step 2/3. This is Argininosuccinate synthase from Pelodictyon phaeoclathratiforme (strain DSM 5477 / BU-1).